A 262-amino-acid chain; its full sequence is Adenosylcobinamide-GDP ribazoletransferase (262 aa).

Helical transmembrane passes span 37–57, 58–78, 112–132, 139–159, 183–203, 205–225, and 237–257; these read SMPL…ALCS, MFSF…GIWL, VGAF…LFLY, IPPA…AWLL, AVWA…FGGV, VWTS…AKPW, and VLGA…WLLH.

The protein belongs to the CobS family. Requires Mg(2+) as cofactor.

It localises to the cell membrane. It catalyses the reaction alpha-ribazole + adenosylcob(III)inamide-GDP = adenosylcob(III)alamin + GMP + H(+). The enzyme catalyses alpha-ribazole 5'-phosphate + adenosylcob(III)inamide-GDP = adenosylcob(III)alamin 5'-phosphate + GMP + H(+). Its pathway is cofactor biosynthesis; adenosylcobalamin biosynthesis; adenosylcobalamin from cob(II)yrinate a,c-diamide: step 7/7. Functionally, joins adenosylcobinamide-GDP and alpha-ribazole to generate adenosylcobalamin (Ado-cobalamin). Also synthesizes adenosylcobalamin 5'-phosphate from adenosylcobinamide-GDP and alpha-ribazole 5'-phosphate. The polypeptide is Adenosylcobinamide-GDP ribazoletransferase (Geobacillus thermodenitrificans (strain NG80-2)).